Consider the following 202-residue polypeptide: Ras-related protein Rab-18 (202 aa).

GTP contacts are provided by serine 18, glycine 21, lysine 22, serine 23, serine 24, aspartate 35, proline 36, threonine 41, glycine 67, lysine 124, aspartate 126, and alanine 153. Positions glutamine 38–phenylalanine 46 match the Effector region motif. 2 S-geranylgeranyl cysteine lipidation sites follow: cysteine 198 and cysteine 200.

This sequence belongs to the small GTPase superfamily. Rab family.

The protein localises to the cell membrane. The catalysed reaction is GTP + H2O = GDP + phosphate + H(+). Functionally, the small GTPases Rab are key regulators of intracellular membrane trafficking, from the formation of transport vesicles to their fusion with membranes. Rabs cycle between an inactive GDP-bound form and an active GTP-bound form that is able to recruit to membranes different sets of downstream effectors directly responsible for vesicle formation, movement, tethering and fusion. This is Ras-related protein Rab-18 (RAB18A) from Lymnaea stagnalis (Great pond snail).